The chain runs to 535 residues: CTP synthase (535 aa).

An amidoligase domain region spans residues 1–267 (MTKFIFVTGG…DDIVIQRLQL (267 aa)). Ser-13 provides a ligand contact to CTP. A UTP-binding site is contributed by Ser-13. Residue 14 to 19 (SLGKGI) coordinates ATP. Residue Tyr-54 participates in L-glutamine binding. Asp-71 contributes to the ATP binding site. Mg(2+)-binding residues include Asp-71 and Glu-141. Residues 148–150 (DIE), 188–193 (KTKPTQ), and Lys-224 contribute to the CTP site. UTP contacts are provided by residues 188 to 193 (KTKPTQ) and Lys-224. 240–242 (RDA) contacts ATP. The 243-residue stretch at 293–535 (TIGLVGKYVS…VEAALNYQQK (243 aa)) folds into the Glutamine amidotransferase type-1 domain. Gly-355 is a binding site for L-glutamine. Cys-382 (nucleophile; for glutamine hydrolysis) is an active-site residue. Residues 383 to 386 (LGMQ), Glu-406, and Arg-463 contribute to the L-glutamine site. Catalysis depends on residues His-508 and Glu-510.

It belongs to the CTP synthase family. In terms of assembly, homotetramer.

It catalyses the reaction UTP + L-glutamine + ATP + H2O = CTP + L-glutamate + ADP + phosphate + 2 H(+). It carries out the reaction L-glutamine + H2O = L-glutamate + NH4(+). The enzyme catalyses UTP + NH4(+) + ATP = CTP + ADP + phosphate + 2 H(+). It participates in pyrimidine metabolism; CTP biosynthesis via de novo pathway; CTP from UDP: step 2/2. With respect to regulation, allosterically activated by GTP, when glutamine is the substrate; GTP has no effect on the reaction when ammonia is the substrate. The allosteric effector GTP functions by stabilizing the protein conformation that binds the tetrahedral intermediate(s) formed during glutamine hydrolysis. Inhibited by the product CTP, via allosteric rather than competitive inhibition. Catalyzes the ATP-dependent amination of UTP to CTP with either L-glutamine or ammonia as the source of nitrogen. Regulates intracellular CTP levels through interactions with the four ribonucleotide triphosphates. The sequence is that of CTP synthase from Staphylococcus epidermidis (strain ATCC 35984 / DSM 28319 / BCRC 17069 / CCUG 31568 / BM 3577 / RP62A).